Consider the following 463-residue polypeptide: Glutamate--tRNA ligase (463 aa).

A 'HIGH' region motif is present at residues 10–20 (PSPTGHLHIGG). The short motif at 236–240 (KLSKR) is the 'KMSKS' region element. K239 provides a ligand contact to ATP.

It belongs to the class-I aminoacyl-tRNA synthetase family. Glutamate--tRNA ligase type 1 subfamily. Monomer.

It localises to the cytoplasm. The enzyme catalyses tRNA(Glu) + L-glutamate + ATP = L-glutamyl-tRNA(Glu) + AMP + diphosphate. Its function is as follows. Catalyzes the attachment of glutamate to tRNA(Glu) in a two-step reaction: glutamate is first activated by ATP to form Glu-AMP and then transferred to the acceptor end of tRNA(Glu). This is Glutamate--tRNA ligase from Nitratidesulfovibrio vulgaris (strain DP4) (Desulfovibrio vulgaris).